The chain runs to 1100 residues: Exportin-T (1100 aa).

This sequence belongs to the exportin family. In terms of assembly, interacts with CEX1, GSP1, GSP2, NSP1, NUP2 and UTP8.

It is found in the nucleus. It localises to the cytoplasm. In terms of biological role, tRNA nucleus export receptor which facilitates tRNA translocation across the nuclear pore complex. Preferentially interacts with tRNAs with mature 5'- and 3'-termini and does not distinguish between intron-containing and spliced tRNAs. In the nucleus binds to tRNA and to the Ran-GTPases GSP1 or GSP2 in their active GTP-bound form. Docking of this trimeric complex to the nuclear pore complex (NPC) is mediated through binding to nucleoporins. Upon transit of a nuclear export complex into the cytoplasm, disassembling of the complex and hydrolysis of Ran-GTP to Ran-GDP cause release of the tRNA from the export receptor. The directionality of nuclear export is thought to be conferred by an asymmetric distribution of the GTP- and GDP-bound forms of Ran between the cytoplasm and nucleus. In Saccharomyces cerevisiae (strain ATCC 204508 / S288c) (Baker's yeast), this protein is Exportin-T (LOS1).